The sequence spans 210 residues: High frequency lysogenization protein HflD homolog (210 aa).

Positions 103–130 (EAKAKLAERLQQIERQLPLYENDIMADQ) form a coiled coil.

The protein belongs to the HflD family.

Its subcellular location is the cytoplasm. The protein localises to the cell inner membrane. The chain is High frequency lysogenization protein HflD homolog from Actinobacillus pleuropneumoniae serotype 5b (strain L20).